We begin with the raw amino-acid sequence, 387 residues long: 3-hydroxy-D-aspartate aldolase (387 aa).

Lys62 carries the N6-(pyridoxal phosphate)lysine modification. Pyridoxal 5'-phosphate-binding positions include Gln85, Thr238, 256–257, and Tyr265; that span reads GS. Mg(2+) contacts are provided by His355 and Asp357.

It belongs to the DSD1 family. In terms of assembly, homodimer. It depends on pyridoxal 5'-phosphate as a cofactor. Requires Mg(2+) as cofactor.

The catalysed reaction is (3S)-3-hydroxy-D-aspartate = glyoxylate + glycine. It carries out the reaction (3R)-3-hydroxy-D-aspartate = glyoxylate + glycine. In terms of biological role, catalyzes the condensation of glyoxylate and glycine into (2R,3S)-beta-hydroxyaspartate ((3S)-3-hydroxy-D-aspartate). Is essential for the growth of P.denitrificans in the presence of glycolate and glyoxylate since it functions in glyoxylate assimilation via the beta-hydroxyaspartate cycle (BHAC). Is also able to catalyze the reverse reaction in vitro, i.e. the cleavage of (3S)-3-hydroxy-D-aspartate, and that of D-threonine to a lesser extent. The polypeptide is 3-hydroxy-D-aspartate aldolase (Paracoccus denitrificans (strain Pd 1222)).